Reading from the N-terminus, the 244-residue chain is ATP synthase subunit a (244 aa).

The next 7 helical transmembrane spans lie at 17–37 (LSNV…AVLT), 74–94 (PFLA…MLGL), 112–132 (DPAI…YYGV), 148–168 (IPLL…TLGL), 171–191 (YGNI…ATNF), 196–216 (IALG…WQAF), and 217–237 (SLFV…VYIS).

The protein belongs to the ATPase A chain family. In terms of assembly, F-type ATPases have 2 components, CF(1) - the catalytic core - and CF(0) - the membrane proton channel. CF(1) has five subunits: alpha(3), beta(3), gamma(1), delta(1), epsilon(1). CF(0) has three main subunits: a(1), b(2) and c(9-12). The alpha and beta chains form an alternating ring which encloses part of the gamma chain. CF(1) is attached to CF(0) by a central stalk formed by the gamma and epsilon chains, while a peripheral stalk is formed by the delta and b chains.

It is found in the cell membrane. Its function is as follows. Key component of the proton channel; it plays a direct role in the translocation of protons across the membrane. This chain is ATP synthase subunit a, found in Bacillus pumilus (strain SAFR-032).